The following is a 331-amino-acid chain: DNA-directed RNA polymerase subunit alpha (331 aa).

The segment at 1 to 246 (MMQTSRTLHN…GLFSPLQEVS (246 aa)) is alpha N-terminal domain (alpha-NTD). Positions 256 to 331 (AEDNQKNQIP…LTLPRERSKT (76 aa)) are alpha C-terminal domain (alpha-CTD).

It belongs to the RNA polymerase alpha chain family. In terms of assembly, in cyanobacteria the RNAP catalytic core is composed of 2 alpha, 1 beta, 1 beta', 1 gamma and 1 omega subunit. When a sigma factor is associated with the core the holoenzyme is formed, which can initiate transcription.

It carries out the reaction RNA(n) + a ribonucleoside 5'-triphosphate = RNA(n+1) + diphosphate. In terms of biological role, DNA-dependent RNA polymerase catalyzes the transcription of DNA into RNA using the four ribonucleoside triphosphates as substrates. The polypeptide is DNA-directed RNA polymerase subunit alpha (Synechococcus sp. (strain JA-3-3Ab) (Cyanobacteria bacterium Yellowstone A-Prime)).